The primary structure comprises 207 residues: Small ribosomal subunit protein uS4 (207 aa).

Residues 33 to 54 (KLDSKPGQHGRTSGARTSDYGN) are disordered. The span at 42 to 53 (GRTSGARTSDYG) shows a compositional bias: polar residues. In terms of domain architecture, S4 RNA-binding spans 97-160 (SRLDNVVYRM…KKQVRIAEAL (64 aa)).

Belongs to the universal ribosomal protein uS4 family. Part of the 30S ribosomal subunit. Contacts protein S5. The interaction surface between S4 and S5 is involved in control of translational fidelity.

Functionally, one of the primary rRNA binding proteins, it binds directly to 16S rRNA where it nucleates assembly of the body of the 30S subunit. Its function is as follows. With S5 and S12 plays an important role in translational accuracy. The sequence is that of Small ribosomal subunit protein uS4 from Cupriavidus necator (strain ATCC 17699 / DSM 428 / KCTC 22496 / NCIMB 10442 / H16 / Stanier 337) (Ralstonia eutropha).